We begin with the raw amino-acid sequence, 484 residues long: 3-isopropylmalate dehydratase large subunit (484 aa).

3 residues coordinate [4Fe-4S] cluster: Cys-352, Cys-412, and Cys-415. A disordered region spans residues 463–484 (TLSSPSDLDPAPASAAIRTDAA). Residues 464–478 (LSSPSDLDPAPASAA) show a composition bias toward low complexity.

The protein belongs to the aconitase/IPM isomerase family. LeuC type 1 subfamily. In terms of assembly, heterodimer of LeuC and LeuD. [4Fe-4S] cluster is required as a cofactor.

The enzyme catalyses (2R,3S)-3-isopropylmalate = (2S)-2-isopropylmalate. It participates in amino-acid biosynthesis; L-leucine biosynthesis; L-leucine from 3-methyl-2-oxobutanoate: step 2/4. Functionally, catalyzes the isomerization between 2-isopropylmalate and 3-isopropylmalate, via the formation of 2-isopropylmaleate. The sequence is that of 3-isopropylmalate dehydratase large subunit from Pseudarthrobacter chlorophenolicus (strain ATCC 700700 / DSM 12829 / CIP 107037 / JCM 12360 / KCTC 9906 / NCIMB 13794 / A6) (Arthrobacter chlorophenolicus).